A 100-amino-acid polypeptide reads, in one-letter code: Small ribosomal subunit protein bS20 (100 aa).

A disordered region spans residues 79–100 (AAHQKSRLSAAVKQAIEPAPST).

Belongs to the bacterial ribosomal protein bS20 family.

Its function is as follows. Binds directly to 16S ribosomal RNA. The chain is Small ribosomal subunit protein bS20 from Prochlorococcus marinus (strain MIT 9303).